Consider the following 556-residue polypeptide: Testis-specific protein 10-interacting protein (556 aa).

The span at 1-16 (MGQDTDMLNTYQQLVR) shows a compositional bias: polar residues. 4 disordered regions span residues 1–31 (MGQD…LQAP), 50–102 (GCLG…LLPR), 123–155 (LQPS…ANLP), and 179–309 (GGVS…QWRK). The span at 208-219 (GSASDKQVQLQS) shows a compositional bias: polar residues. A compositionally biased stretch (acidic residues) spans 244 to 258 (SEEEQFSEATEEAEE). Residues 289–301 (QGQSQGSSPSFNN) are compositionally biased toward polar residues. Residues 379–464 (RQEATRSLLQ…LQGIQHRVQA (86 aa)) adopt a coiled-coil conformation. The disordered stretch occupies residues 503–556 (AGKVDREGTPRKPRSHRSMGVRMEHSPQRPPRTEPTGSQPDRHYNPSLDPECSP).

This Homo sapiens (Human) protein is Testis-specific protein 10-interacting protein (TSGA10IP).